The primary structure comprises 95 residues: MSYTITAQTRTEIGKGSSRRLRHAGKVPAVIYGAGKEPVSIVFDHKDIINAQANDDFYTSVVTIVLDGKEVGVRAQAMQRHAFKPIIEHVDFVYA.

It belongs to the bacterial ribosomal protein bL25 family. As to quaternary structure, part of the 50S ribosomal subunit; part of the 5S rRNA/L5/L18/L25 subcomplex. Contacts the 5S rRNA. Binds to the 5S rRNA independently of L5 and L18.

In terms of biological role, this is one of the proteins that binds to the 5S RNA in the ribosome where it forms part of the central protuberance. This is Large ribosomal subunit protein bL25 from Shewanella oneidensis (strain ATCC 700550 / JCM 31522 / CIP 106686 / LMG 19005 / NCIMB 14063 / MR-1).